The following is a 263-amino-acid chain: tRNA (guanine-N(7)-)-methyltransferase (263 aa).

The segment covering 1 to 10 has biased composition (polar residues); it reads MLPQDPSTEP. The interval 1–38 is disordered; that stretch reads MLPQDPSTEPTPADDAAPVDSAGQASAPSPADPEGVAH. S-adenosyl-L-methionine-binding residues include Glu-91, Glu-116, Asp-143, and Asp-166. Asp-166 is an active-site residue. Residue Lys-170 coordinates substrate. Residues 172–177 are interaction with RNA; it reads RHNKRR. Substrate-binding positions include Asp-202 and 240–243; that span reads TKFE.

This sequence belongs to the class I-like SAM-binding methyltransferase superfamily. TrmB family.

The catalysed reaction is guanosine(46) in tRNA + S-adenosyl-L-methionine = N(7)-methylguanosine(46) in tRNA + S-adenosyl-L-homocysteine. The protein operates within tRNA modification; N(7)-methylguanine-tRNA biosynthesis. In terms of biological role, catalyzes the formation of N(7)-methylguanine at position 46 (m7G46) in tRNA. The chain is tRNA (guanine-N(7)-)-methyltransferase from Cupriavidus necator (strain ATCC 17699 / DSM 428 / KCTC 22496 / NCIMB 10442 / H16 / Stanier 337) (Ralstonia eutropha).